The following is a 300-amino-acid chain: 17-beta-hydroxysteroid dehydrogenase 13 (300 aa).

An N-terminal signal peptide occupies residues 1–19 (MNIILEILLLLITIIYSYL). Phosphoserine is present on Ser-33. NAD(+) is bound at residue 40 to 67 (LITGAGHGIGRQTTYEFAKRQSILVLWD). Ser-172 serves as a coordination point for substrate. Tyr-185 functions as the Proton acceptor in the catalytic mechanism. An NAD(+)-binding site is contributed by Lys-189.

Belongs to the short-chain dehydrogenases/reductases (SDR) family. In terms of tissue distribution, highly expressed in the liver. Also detected in ovary, bone marrow, kidney, brain, lung, skeletal muscle, bladder and testis.

It is found in the lipid droplet. It localises to the endoplasmic reticulum. Its subcellular location is the cytoplasm. The enzyme catalyses 17beta-estradiol + NAD(+) = estrone + NADH + H(+). It catalyses the reaction all-trans-retinol + NAD(+) = all-trans-retinal + NADH + H(+). It carries out the reaction all-trans-retinal + NAD(+) + H2O = all-trans-retinoate + NADH + 2 H(+). In terms of biological role, plays a pivotal role in hepatic lipid metabolism. In vitro, it catalyzes the oxidation of a variety of lipid substrates, including 17beta-estradiol, retinol, retinal, and leukotriene B4. Has retinol/retinal dehydrogenase activity in vitro. Functionally, does not have retinol/retinal dehydrogenase activity in vitro. This Homo sapiens (Human) protein is 17-beta-hydroxysteroid dehydrogenase 13.